Here is a 216-residue protein sequence, read N- to C-terminus: MSELKIKAAKAAIAYIEDDMVIGVGTGSTVNFFIKELAAIKHKIEACVASSKATEALLRAEGIPVIDLNSVQDLPIYVDGADEVNERGEMIKGGGGALTREKIVANVATQFICIVDESKVVKRLGEFPVAVEVIPMARSFVARQIVKLGGDPEYREGFVTDNGNIILDVFNLSFSTPMALEDSLNVIPGVVENGVFAKRLADKVLVASASGVNNLK.

Substrate contacts are provided by residues 26–29 (TGST), 79–82 (DGAD), and 92–95 (KGGG). Glu-101 (proton acceptor) is an active-site residue. Lys-119 is a binding site for substrate.

It belongs to the ribose 5-phosphate isomerase family. As to quaternary structure, homodimer.

The enzyme catalyses aldehydo-D-ribose 5-phosphate = D-ribulose 5-phosphate. The protein operates within carbohydrate degradation; pentose phosphate pathway; D-ribose 5-phosphate from D-ribulose 5-phosphate (non-oxidative stage): step 1/1. In terms of biological role, catalyzes the reversible conversion of ribose-5-phosphate to ribulose 5-phosphate. The sequence is that of Ribose-5-phosphate isomerase A from Legionella pneumophila subsp. pneumophila (strain Philadelphia 1 / ATCC 33152 / DSM 7513).